The chain runs to 485 residues: Leukocyte receptor cluster member 9 (485 aa).

The C3H1-type zinc-finger motif lies at 8-35; that stretch reads SEAPAVCRFFLEGRCRFGARCRQPHPGA. The segment at 212–247 is disordered; sequence ETRTGLDSSLETPEVDGPTKETGLNGTTELEMPDPS.

This chain is Leukocyte receptor cluster member 9 (Leng9), found in Mus musculus (Mouse).